We begin with the raw amino-acid sequence, 354 residues long: ATPase GET3 (354 aa).

26–33 (KGGVGKTT) provides a ligand contact to ATP. Aspartate 57 is a catalytic residue. 2 residues coordinate ATP: glutamate 245 and asparagine 272. Zn(2+) is bound by residues cysteine 285 and cysteine 288.

Belongs to the arsA ATPase family. In terms of assembly, homodimer. Component of the Golgi to ER traffic (GET) complex, which is composed of GET1, GET2 and GET3. Within the complex, GET1 and GET2 form a heterotetramer which is stabilized by phosphatidylinositol binding and which binds to the GET3 homodimer. Interacts with the chloride channel protein GEF1.

It localises to the cytoplasm. It is found in the endoplasmic reticulum. The protein resides in the golgi apparatus. ATPase required for the post-translational delivery of tail-anchored (TA) proteins to the endoplasmic reticulum. Recognizes and selectively binds the transmembrane domain of TA proteins in the cytosol. This complex then targets to the endoplasmic reticulum by membrane-bound receptors GET1 and GET2, where the tail-anchored protein is released for insertion. This process is regulated by ATP binding and hydrolysis. ATP binding drives the homodimer towards the closed dimer state, facilitating recognition of newly synthesized TA membrane proteins. ATP hydrolysis is required for insertion. Subsequently, the homodimer reverts towards the open dimer state, lowering its affinity for the GET1-GET2 receptor, and returning it to the cytosol to initiate a new round of targeting. Cooperates with the HDEL receptor ERD2 to mediate the ATP-dependent retrieval of resident ER proteins that contain a C-terminal H-D-E-L retention signal from the Golgi to the ER. Involved in low-level resistance to the oxyanions arsenite and arsenate, and in heat tolerance. This chain is ATPase GET3, found in Saccharomyces cerevisiae (strain RM11-1a) (Baker's yeast).